A 173-amino-acid polypeptide reads, in one-letter code: Myeloid-derived growth factor (173 aa).

Positions 1–31 (MAAPSGGWNGVGASLWAALLLGAVALRPAEA) are cleaved as a signal peptide.

This sequence belongs to the MYDGF family. In terms of tissue distribution, expressed in eosinophils (at protein level). Expressed in bone marrow cells. Expressed in synovial tissue. Found in synovial fluid of patients with arthropaties.

The protein resides in the secreted. Its subcellular location is the endoplasmic reticulum-Golgi intermediate compartment. It localises to the endoplasmic reticulum. The protein localises to the golgi apparatus. In terms of biological role, bone marrow-derived monocyte and paracrine-acting protein that promotes cardiac myocyte survival and adaptive angiogenesis for cardiac protection and/or repair after myocardial infarction (MI). Stimulates endothelial cell proliferation through a MAPK1/3-, STAT3- and CCND1-mediated signaling pathway. Inhibits cardiac myocyte apoptosis in a PI3K/AKT-dependent signaling pathway. Involved in endothelial cell proliferation and angiogenesis. This chain is Myeloid-derived growth factor, found in Homo sapiens (Human).